A 348-amino-acid polypeptide reads, in one-letter code: Dihydroorotate dehydrogenase (quinone) (348 aa).

FMN is bound by residues Ala-60 to Lys-64 and Thr-84. Lys-64 is a substrate binding site. Residue Asn-109 to Phe-113 participates in substrate binding. Residues Asn-137 and Asn-170 each coordinate FMN. Asn-170 lines the substrate pocket. Ser-173 (nucleophile) is an active-site residue. Asn-175 contacts substrate. FMN is bound by residues Lys-215 and Thr-243. Asn-244–Thr-245 provides a ligand contact to substrate. Residues Gly-266, Gly-295, and Tyr-316–Ser-317 contribute to the FMN site.

This sequence belongs to the dihydroorotate dehydrogenase family. Type 2 subfamily. As to quaternary structure, monomer. The cofactor is FMN.

The protein resides in the cell membrane. It catalyses the reaction (S)-dihydroorotate + a quinone = orotate + a quinol. It participates in pyrimidine metabolism; UMP biosynthesis via de novo pathway; orotate from (S)-dihydroorotate (quinone route): step 1/1. In terms of biological role, catalyzes the conversion of dihydroorotate to orotate with quinone as electron acceptor. The protein is Dihydroorotate dehydrogenase (quinone) of Nitrosospira multiformis (strain ATCC 25196 / NCIMB 11849 / C 71).